The primary structure comprises 149 residues: Probable flagellum biosynthesis repressor protein FlbT (149 aa).

It belongs to the FlbT family.

Has a post-transcriptional repressor function in flagellum biogenesis. Associates with the 5'-UTR of fljK mRNA and promotes its degradation. The sequence is that of Probable flagellum biosynthesis repressor protein FlbT from Agrobacterium fabrum (strain C58 / ATCC 33970) (Agrobacterium tumefaciens (strain C58)).